The sequence spans 281 residues: Ribonuclease HII (281 aa).

The interval 1-46 is disordered; that stretch reads MIRDTKQPIKVPAKPASRSGGKAKTVKPKTIKPKTSAKAAAAKPAS. Low complexity predominate over residues 33–46; it reads PKTSAKAAAAKPAS. Residues 73 to 261 enclose the RNase H type-2 domain; it reads WPIAGCDEAG…VAAAWQKIEG (189 aa). A divalent metal cation is bound by residues Asp-79, Glu-80, and Asp-170.

This sequence belongs to the RNase HII family. Requires Mn(2+) as cofactor. Mg(2+) is required as a cofactor.

Its subcellular location is the cytoplasm. It catalyses the reaction Endonucleolytic cleavage to 5'-phosphomonoester.. In terms of biological role, endonuclease that specifically degrades the RNA of RNA-DNA hybrids. The protein is Ribonuclease HII of Rhodopseudomonas palustris (strain TIE-1).